A 647-amino-acid polypeptide reads, in one-letter code: RAF proto-oncogene serine/threonine-protein kinase (647 aa).

Position 43 is a phosphoserine (serine 43). The RBD domain occupies 56 to 131; the sequence is NTIRVFLPNK…IGEELQVDFL (76 aa). Residues 138-184 form a Phorbol-ester/DAG-type zinc finger; that stretch reads THNFARKTFLKLAFCDICQKFLLNGFRCQTCGYKFHEHCSTKVPTMC. Disordered regions lie at residues 236 to 269 and 284 to 334; these read HVFTFNTSNPSSEGTLSQRQRSTSTPNVHMVSTT and HSES…RPRG. Positions 239–269 are enriched in polar residues; the sequence is TFNTSNPSSEGTLSQRQRSTSTPNVHMVSTT. Phosphoserine is present on serine 259. Residue threonine 268 is modified to Phosphothreonine; by autocatalysis. The segment covering 286-297 has biased composition (low complexity); it reads ESASPSALSGSP. The segment covering 298–309 has biased composition (polar residues); that stretch reads NNMSPTGWSQPK. The residue at position 338 (serine 338) is a Phosphoserine. Residues 349 to 609 enclose the Protein kinase domain; the sequence is VMLSTRIGSG…PQILSSIELL (261 aa). Residues 355–363 and lysine 375 each bind ATP; that span reads IGSGSFGTV. Residue aspartate 468 is the Proton acceptor of the active site. Phosphoserine occurs at positions 499 and 621.

This sequence belongs to the protein kinase superfamily. TKL Ser/Thr protein kinase family. RAF subfamily. In terms of processing, phosphorylation at Ser-259 inactivates kinase activity. Dephosphorylation of Ser-259 by a complex containing protein phosphatase 1 relieves inactivation, leading to stimulate RAF1 activity. In terms of tissue distribution, isoform 1 was present in all tissues tested: skeletal muscle, intestine, brain, gizzard, heart, lung, kidney, bone marrow, spleen and bursa of Fabricius. Isoform 2 was only detected in brain, heart and skeletal muscle. In brain and heart isoform 1 is more abundant than isoform 2. In skeletal muscle isoform 2 is more abundant than isoform 1.

It localises to the cytoplasm. It is found in the cell membrane. It catalyses the reaction L-seryl-[protein] + ATP = O-phospho-L-seryl-[protein] + ADP + H(+). The enzyme catalyses L-threonyl-[protein] + ATP = O-phospho-L-threonyl-[protein] + ADP + H(+). In terms of biological role, serine/threonine-protein kinase that acts as a regulatory link between the membrane-associated Ras GTPases and the MAPK/ERK cascade, and this critical regulatory link functions as a switch determining cell fate decisions. RAF1 activation initiates a mitogen-activated protein kinase (MAPK) cascade that comprises a sequential phosphorylation of the dual-specific MAPK kinases (MAP2K1/MEK1 and MAP2K2/MEK2) and the extracellular signal-regulated kinases (MAPK3/ERK1 and MAPK1/ERK2). The polypeptide is RAF proto-oncogene serine/threonine-protein kinase (RAF1) (Gallus gallus (Chicken)).